The chain runs to 178 residues: Probetacellulin (178 aa).

A signal peptide spans 1–31; that stretch reads MDRAARCSGASSLPLLLALALGLVILHCVVA. Topologically, residues 32 to 118 are extracellular; the sequence is DGNSTRSPET…LFYLRGDRGQ (87 aa). N34 carries an N-linked (GlcNAc...) asparagine glycan. The region spanning 65 to 105 is the EGF-like domain; the sequence is HFSRCPKQYKHYCIKGRCRFVVAEQTPSCVCDEGYIGARCE. 3 cysteine pairs are disulfide-bonded: C69-C82, C77-C93, and C95-C104. Residues 112–178 constitute a propeptide, removed in mature form; that stretch reads LRGDRGQILV…NEDIEETNIA (67 aa). A helical transmembrane segment spans residues 119–139; it reads ILVICLIAVMVVFIILVIGVC. Residues 140–178 are Cytoplasmic-facing; it reads TCCHPLRKRRKRKKKEEEMETLGKDITPINEDIEETNIA.

Monomer. Interacts with EGFR and ERBB4. As to expression, synthesized in several tissues and tumor cells. Predominantly expressed in pancreas and small intestine.

It localises to the secreted. It is found in the extracellular space. The protein resides in the cell membrane. In terms of biological role, growth factor that binds to EGFR, ERBB4 and other EGF receptor family members. Potent mitogen for retinal pigment epithelial cells and vascular smooth muscle cells. This is Probetacellulin (BTC) from Homo sapiens (Human).